We begin with the raw amino-acid sequence, 406 residues long: UPF0754 membrane protein SYNPCC7002_A1087 (406 aa).

A helical membrane pass occupies residues 384 to 404 (IVNLGGVLGFLVGVAQSVILL).

Belongs to the UPF0754 family.

It localises to the cell inner membrane. The polypeptide is UPF0754 membrane protein SYNPCC7002_A1087 (Picosynechococcus sp. (strain ATCC 27264 / PCC 7002 / PR-6) (Agmenellum quadruplicatum)).